A 556-amino-acid chain; its full sequence is Vetispiradiene synthase 1 (556 aa).

The Mg(2+) site is built by D309, D313, D452, T456, and E460. The DDXXD motif signature appears at 309–313; sequence DDTFD.

It belongs to the terpene synthase family. Tpsa subfamily. Mg(2+) serves as cofactor.

It is found in the cytoplasm. The enzyme catalyses (2E,6E)-farnesyl diphosphate = (-)-vetispiradiene + diphosphate. The protein operates within secondary metabolite biosynthesis; terpenoid biosynthesis. Sesquiterpene synthase that catalyzes the formation of vetispiradiene from trans,trans-farnesyl diphosphate. The initial internal cyclization produces the monocyclic intermediate germacrene A. The polypeptide is Vetispiradiene synthase 1 (PVS1) (Solanum tuberosum (Potato)).